Consider the following 326-residue polypeptide: Probable pectate lyase B (326 aa).

An N-terminal signal peptide occupies residues Met-1–Ala-15. Ca(2+)-binding residues include Asp-133, Asp-162, and Asp-166. Residue Arg-219 is part of the active site.

Belongs to the polysaccharide lyase 1 family. Ca(2+) is required as a cofactor.

It localises to the secreted. It catalyses the reaction Eliminative cleavage of (1-&gt;4)-alpha-D-galacturonan to give oligosaccharides with 4-deoxy-alpha-D-galact-4-enuronosyl groups at their non-reducing ends.. Pectinolytic enzyme consist of four classes of enzymes: pectin lyase, polygalacturonase, pectin methylesterase and rhamnogalacturonase. Among pectinolytic enzymes, pectin lyase is the most important in depolymerization of pectin, since it cleaves internal glycosidic bonds of highly methylated pectins. Favors pectate, the anion, over pectin, the methyl ester. This is Probable pectate lyase B (plyB) from Aspergillus flavus (strain ATCC 200026 / FGSC A1120 / IAM 13836 / NRRL 3357 / JCM 12722 / SRRC 167).